Consider the following 102-residue polypeptide: Sulfur globule protein CV3 (102 aa).

Residues 1–25 form the signal peptide; it reads MTMKRLLLVSTLAGASALATLPANA.

In terms of assembly, the protein envelope of the sulfur globules is composed of the three different proteins CV1, CV2 and CV3.

Functionally, structural protein of the sulfur globules, which are intracellular globules that serve for sulfur storage in purple sulfur bacteria. This chain is Sulfur globule protein CV3 (sgpC), found in Allochromatium vinosum (strain ATCC 17899 / DSM 180 / NBRC 103801 / NCIMB 10441 / D) (Chromatium vinosum).